A 628-amino-acid polypeptide reads, in one-letter code: Very-long-chain aldehyde decarbonylase GL1-2 (628 aa).

Helical transmembrane passes span 37 to 57 (GAAPVGSWWLHLLLLFAARGL), 131 to 151 (GWAIALLLHVLVAEPLFYWAH), 191 to 211 (VVIGVPLAGAFLMGVGSVGLV), 299 to 319 (DFVFLAHVVDIMASMHVPFVL), and 331 to 351 (FVLLPFWPVAFGFMLLMWCCS). Positions 137–277 (LLHVLVAEPL…MPIFDLLGGT (141 aa)) constitute a Fatty acid hydroxylase domain.

The protein belongs to the sterol desaturase family. Homodimer. As to expression, expressed in germinating seeds, radicals and leaves.

The protein localises to the endoplasmic reticulum membrane. It carries out the reaction a long-chain fatty aldehyde + 2 NADPH + O2 + H(+) = a long-chain alkane + formate + 2 NADP(+) + H2O. Aldehyde decarbonylase involved in the conversion of aldehydes to alkanes. Core component of a very-long-chain alkane synthesis complex. Required for the formation of wax layers conferring cuticular permeability and drought tolerance. This chain is Very-long-chain aldehyde decarbonylase GL1-2, found in Oryza sativa subsp. japonica (Rice).